The sequence spans 253 residues: Malonyl-[acyl-carrier protein] O-methyltransferase (253 aa).

This sequence belongs to the methyltransferase superfamily.

The catalysed reaction is malonyl-[ACP] + S-adenosyl-L-methionine = malonyl-[ACP] methyl ester + S-adenosyl-L-homocysteine. It functions in the pathway cofactor biosynthesis; biotin biosynthesis. Functionally, converts the free carboxyl group of a malonyl-thioester to its methyl ester by transfer of a methyl group from S-adenosyl-L-methionine (SAM). It allows to synthesize pimeloyl-ACP via the fatty acid synthetic pathway. The sequence is that of Malonyl-[acyl-carrier protein] O-methyltransferase from Pectobacterium atrosepticum (strain SCRI 1043 / ATCC BAA-672) (Erwinia carotovora subsp. atroseptica).